Consider the following 631-residue polypeptide: uncharacterized protein (631 aa).

9 consecutive transmembrane segments (helical) span residues 42 to 62 (VLVG…IGGF), 76 to 96 (ALKL…GTLL), 106 to 128 (VLGL…GPAP), 152 to 172 (AGLT…GWLW), 344 to 364 (ALKY…FGFA), 366 to 386 (SYWI…VFTL), 398 to 418 (IGVI…YIAF), 429 to 449 (MLIV…ALVI), and 464 to 484 (IARL…TMLL).

This sequence belongs to the YccS/YhfK family.

It localises to the cell membrane. This is an uncharacterized protein from Bacillus subtilis (strain 168).